Reading from the N-terminus, the 287-residue chain is (S)-phenoxypropionate/alpha-ketoglutarate-dioxygenase (287 aa).

Positions 102 and 104 each coordinate Fe cation. Positions 129 and 242 each coordinate 2-oxoglutarate. Residue His-257 coordinates Fe cation. Arg-268 contributes to the 2-oxoglutarate binding site.

The protein belongs to the TfdA dioxygenase family. As to quaternary structure, monomer. Fe cation serves as cofactor. It depends on L-ascorbate as a cofactor.

It carries out the reaction (S)-2-(4-chloro-2-methylphenoxy)propanoate + 2-oxoglutarate + O2 = 2-methyl-4-chlorophenol + pyruvate + succinate + CO2. The enzyme catalyses (S)-(2,4-dichlorophenoxy)propanoate + 2-oxoglutarate + O2 = 2,4-dichlorophenol + pyruvate + succinate + CO2. The protein operates within xenobiotic degradation; 2-(2,4-dichlorophenoxy)propanoate degradation. Involved in the degradation of the phenoxypropionate herbicides. Catalyzes the enantiospecific cleavage of the ether bond in the herbicid S-dichlorprop ((S)-2-(2,4-dichlorophenoxy)propionate)(S-2,4-DP) and S-mecoprop ((S)-2-(4-chloro-2-methylphenoxy)propionate)(S-2,4-MCPP). It can also accept (RS)-2-(4-chloro-2-methylphenoxy)propionate ((RS)-2,4-MCPP) and phenoxyacetate derivatives such as 2,4-dichlorophenoxyacetate (2,4-D), however it can only accept 2-oxoglutarate as oxygen acceptor. In Sphingobium herbicidovorans (strain ATCC 700291 / DSM 11019 / CCUG 56400 / KCTC 2939 / LMG 18315 / NBRC 16415 / MH) (Sphingomonas herbicidovorans), this protein is (S)-phenoxypropionate/alpha-ketoglutarate-dioxygenase.